A 136-amino-acid chain; its full sequence is Glutaredoxin-C8 (136 aa).

The Glutaredoxin domain maps to Ser-33 to Asp-135. A disulfide bond links Cys-53 and Cys-56.

It belongs to the glutaredoxin family. CPYC subfamily.

The protein localises to the cytoplasm. Has a glutathione-disulfide oxidoreductase activity in the presence of NADPH and glutathione reductase. Reduces low molecular weight disulfides and proteins. This Oryza sativa subsp. japonica (Rice) protein is Glutaredoxin-C8 (GRXC8).